The chain runs to 391 residues: Acetate kinase (391 aa).

Asparagine 4 contributes to the Mg(2+) binding site. Lysine 11 contributes to the ATP binding site. Residue arginine 85 participates in substrate binding. Aspartate 142 serves as the catalytic Proton donor/acceptor. ATP contacts are provided by residues 202–206 (HLGNG), 277–279 (DLR), and 325–329 (GIGEN). Glutamate 378 contributes to the Mg(2+) binding site.

The protein belongs to the acetokinase family. As to quaternary structure, homodimer. Requires Mg(2+) as cofactor. It depends on Mn(2+) as a cofactor.

Its subcellular location is the cytoplasm. It carries out the reaction acetate + ATP = acetyl phosphate + ADP. Its pathway is metabolic intermediate biosynthesis; acetyl-CoA biosynthesis; acetyl-CoA from acetate: step 1/2. Catalyzes the formation of acetyl phosphate from acetate and ATP. Can also catalyze the reverse reaction. This Halalkalibacterium halodurans (strain ATCC BAA-125 / DSM 18197 / FERM 7344 / JCM 9153 / C-125) (Bacillus halodurans) protein is Acetate kinase.